The chain runs to 424 residues: Adenylosuccinate synthetase (424 aa).

Residues 12–18 and 40–42 contribute to the GTP site; these read GDEGKGK and GHT. The active-site Proton acceptor is Asp13. Residues Asp13 and Gly40 each contribute to the Mg(2+) site. IMP contacts are provided by residues 13–16, 38–41, Thr130, Arg144, Asn220, Thr235, and Arg299; these read DEGK and NAGH. The Proton donor role is filled by His41. Substrate is bound at residue 295-301; it reads VTTGRKR. GTP contacts are provided by residues Arg301, 327 to 329, and 412 to 414; these read KLD and GTG.

Belongs to the adenylosuccinate synthetase family. As to quaternary structure, homodimer. Requires Mg(2+) as cofactor.

It is found in the cytoplasm. It carries out the reaction IMP + L-aspartate + GTP = N(6)-(1,2-dicarboxyethyl)-AMP + GDP + phosphate + 2 H(+). The protein operates within purine metabolism; AMP biosynthesis via de novo pathway; AMP from IMP: step 1/2. In terms of biological role, plays an important role in the de novo pathway and in the salvage pathway of purine nucleotide biosynthesis. Catalyzes the first committed step in the biosynthesis of AMP from IMP. The protein is Adenylosuccinate synthetase (adB) of Emericella nidulans (strain FGSC A4 / ATCC 38163 / CBS 112.46 / NRRL 194 / M139) (Aspergillus nidulans).